Reading from the N-terminus, the 305-residue chain is Glyceraldehyde-3-phosphate dehydrogenase 2, cytosolic (305 aa).

2 residues coordinate NAD(+): aspartate 3 and arginine 50. Residues 121–123 (SCT), threonine 152, 181–182 (TG), and arginine 204 contribute to the D-glyceraldehyde 3-phosphate site. Cysteine 122 (nucleophile) is an active-site residue. Asparagine 286 serves as a coordination point for NAD(+).

Belongs to the glyceraldehyde-3-phosphate dehydrogenase family. In terms of assembly, homotetramer.

The protein localises to the cytoplasm. It catalyses the reaction D-glyceraldehyde 3-phosphate + phosphate + NAD(+) = (2R)-3-phospho-glyceroyl phosphate + NADH + H(+). It functions in the pathway carbohydrate degradation; glycolysis; pyruvate from D-glyceraldehyde 3-phosphate: step 1/5. Its function is as follows. Key enzyme in glycolysis that catalyzes the first step of the pathway by converting D-glyceraldehyde 3-phosphate (G3P) into 3-phospho-D-glyceroyl phosphate. Essential for the maintenance of cellular ATP levels and carbohydrate metabolism. This is Glyceraldehyde-3-phosphate dehydrogenase 2, cytosolic (GAPC) from Hordeum vulgare (Barley).